The sequence spans 133 residues: ATP synthase epsilon chain (133 aa).

The protein belongs to the ATPase epsilon chain family. In terms of assembly, F-type ATPases have 2 components, CF(1) - the catalytic core - and CF(0) - the membrane proton channel. CF(1) has five subunits: alpha(3), beta(3), gamma(1), delta(1), epsilon(1). CF(0) has three main subunits: a, b and c.

The protein resides in the cell membrane. In terms of biological role, produces ATP from ADP in the presence of a proton gradient across the membrane. The sequence is that of ATP synthase epsilon chain from Lawsonia intracellularis (strain PHE/MN1-00).